Consider the following 370-residue polypeptide: Probable endopolygalacturonase A (370 aa).

An N-terminal signal peptide occupies residues Met1–Ala19. Residues Ala20–Arg32 constitute a propeptide that is removed on maturation. Cys35 and Cys50 are joined by a disulfide. PbH1 repeat units follow at residues Ser162–Glu192, Ser193–Ser214, Gly215–Ser235, Val244–Thr265, Val273–Gln295, and Ser307–Gly352. Asp207 serves as the catalytic Proton donor. The cysteines at positions 209 and 225 are disulfide-linked. His229 is a catalytic residue. N-linked (GlcNAc...) asparagine glycosylation is present at Asn246. Disulfide bonds link Cys335/Cys340 and Cys359/Cys368.

Belongs to the glycosyl hydrolase 28 family.

It is found in the secreted. The catalysed reaction is (1,4-alpha-D-galacturonosyl)n+m + H2O = (1,4-alpha-D-galacturonosyl)n + (1,4-alpha-D-galacturonosyl)m.. Its function is as follows. Involved in maceration and soft-rotting of plant tissue. Hydrolyzes the 1,4-alpha glycosidic bonds of de-esterified pectate in the smooth region of the plant cell wall. This chain is Probable endopolygalacturonase A (pgaA), found in Aspergillus kawachii (strain NBRC 4308) (White koji mold).